Here is a 150-residue protein sequence, read N- to C-terminus: UPF0756 membrane protein HAPS_1649 (150 aa).

5 helical membrane-spanning segments follow: residues 1–21 (MSLQ…LGIF), 27–46 (VTIS…SKYV), 52–72 (YGIK…LVSG), 82–102 (LINW…WLGG), and 123–143 (IIGV…AGIL).

It belongs to the UPF0756 family.

The protein resides in the cell membrane. The protein is UPF0756 membrane protein HAPS_1649 of Glaesserella parasuis serovar 5 (strain SH0165) (Haemophilus parasuis).